The chain runs to 156 residues: Endogenous retrovirus group K member 113 Pro protein (156 aa).

The Peptidase A2 domain occupies 21-96 (FEGLVDTGAD…IPLNLWGRDL (76 aa)). The active site involves Asp26. Residues 111–156 (YSPTSQKIMTKMGYIPGKGLGKNEDGIKIPVEAKINQKREGIGYPF) form the G-patch domain.

This sequence belongs to the peptidase A2 family. HERV class-II K(HML-2) subfamily. Active as a homodimer. Autoproteolytically processed at the N-terminus. Expected C-terminal autoprocessing not detected. The sequence shown is that of the processed Pro protein.

The enzyme catalyses Processing at the authentic HIV-1 PR recognition site and release of the mature p17 matrix and the p24 capsid protein, as a result of the cleavage of the -SQNY-|-PIVQ- cleavage site.. Functionally, retroviral proteases have roles in the processing of the primary translation products and the maturation of the viral particle. Endogenous Pro proteins may have kept, lost or modified their original function during evolution. This is Endogenous retrovirus group K member 113 Pro protein (HERVK_113) from Homo sapiens (Human).